The sequence spans 511 residues: ATP synthase subunit alpha (511 aa).

169–176 lines the ATP pocket; that stretch reads GDRQTGKT.

Belongs to the ATPase alpha/beta chains family. F-type ATPases have 2 components, CF(1) - the catalytic core - and CF(0) - the membrane proton channel. CF(1) has five subunits: alpha(3), beta(3), gamma(1), delta(1), epsilon(1). CF(0) has three main subunits: a(1), b(2) and c(9-12). The alpha and beta chains form an alternating ring which encloses part of the gamma chain. CF(1) is attached to CF(0) by a central stalk formed by the gamma and epsilon chains, while a peripheral stalk is formed by the delta and b chains.

It localises to the cell inner membrane. The catalysed reaction is ATP + H2O + 4 H(+)(in) = ADP + phosphate + 5 H(+)(out). In terms of biological role, produces ATP from ADP in the presence of a proton gradient across the membrane. The alpha chain is a regulatory subunit. In Paracoccus denitrificans (strain Pd 1222), this protein is ATP synthase subunit alpha.